The following is a 342-amino-acid chain: 4-hydroxy-3-methylbut-2-enyl diphosphate reductase (342 aa).

[4Fe-4S] cluster is bound at residue Cys47. Residues His78 and His111 each contribute to the (2E)-4-hydroxy-3-methylbut-2-enyl diphosphate site. The dimethylallyl diphosphate site is built by His78 and His111. Isopentenyl diphosphate-binding residues include His78 and His111. Position 133 (Cys133) interacts with [4Fe-4S] cluster. His161 is a binding site for (2E)-4-hydroxy-3-methylbut-2-enyl diphosphate. His161 provides a ligand contact to dimethylallyl diphosphate. His161 contributes to the isopentenyl diphosphate binding site. Residue Glu163 is the Proton donor of the active site. Thr201 provides a ligand contact to (2E)-4-hydroxy-3-methylbut-2-enyl diphosphate. Residue Cys231 participates in [4Fe-4S] cluster binding. (2E)-4-hydroxy-3-methylbut-2-enyl diphosphate contacts are provided by Ser259, Ser260, Asn261, and Ser303. 4 residues coordinate dimethylallyl diphosphate: Ser259, Ser260, Asn261, and Ser303. Ser259, Ser260, Asn261, and Ser303 together coordinate isopentenyl diphosphate.

It belongs to the IspH family. Requires [4Fe-4S] cluster as cofactor.

It catalyses the reaction isopentenyl diphosphate + 2 oxidized [2Fe-2S]-[ferredoxin] + H2O = (2E)-4-hydroxy-3-methylbut-2-enyl diphosphate + 2 reduced [2Fe-2S]-[ferredoxin] + 2 H(+). The enzyme catalyses dimethylallyl diphosphate + 2 oxidized [2Fe-2S]-[ferredoxin] + H2O = (2E)-4-hydroxy-3-methylbut-2-enyl diphosphate + 2 reduced [2Fe-2S]-[ferredoxin] + 2 H(+). It functions in the pathway isoprenoid biosynthesis; dimethylallyl diphosphate biosynthesis; dimethylallyl diphosphate from (2E)-4-hydroxy-3-methylbutenyl diphosphate: step 1/1. Its pathway is isoprenoid biosynthesis; isopentenyl diphosphate biosynthesis via DXP pathway; isopentenyl diphosphate from 1-deoxy-D-xylulose 5-phosphate: step 6/6. Its function is as follows. Catalyzes the conversion of 1-hydroxy-2-methyl-2-(E)-butenyl 4-diphosphate (HMBPP) into a mixture of isopentenyl diphosphate (IPP) and dimethylallyl diphosphate (DMAPP). Acts in the terminal step of the DOXP/MEP pathway for isoprenoid precursor biosynthesis. The polypeptide is 4-hydroxy-3-methylbut-2-enyl diphosphate reductase (Anaplasma marginale (strain St. Maries)).